Reading from the N-terminus, the 391-residue chain is MADIDNKEQSELDQDLDDVEEVEEEETGEETKIKARQLTVQMMQNPQILAALQERLDGLVETPTGYIESLPRVVKRRVNALKNLQVKCAQIEAKFYEEVHDLERKYAVLYQPLFDKRFEIINAIYEPTEEECEWKPDEEDEISEELKEKAKVEDEKKDEEKEDPKGIPEFWLTVFKNVDLLSDMVQEHDEPILKHLKDIKVKFSDAGQPMSFVLEFHFEPNEYFTNEVLTKTYRMRSEPDDSDPFSFDGPEIMGCTGCQIDWKKGKNVTLKTIKKKQKHKGRGTVRTVTKTVSNDSFFNFFAPPEVPESGDLDDDSEAILAADFEIGHFLRERIIPRSVLYFTGEAIEDDDDDYDEEGEEADEEGEEEGDEENDPDYDPKKDQNPAECKQQ.

A compositionally biased stretch (basic and acidic residues) spans 1–10 (MADIDNKEQS). The interval 1-32 (MADIDNKEQSELDQDLDDVEEVEEEETGEETK) is disordered. The residue at position 2 (Ala-2) is an N-acetylalanine. Ser-10 carries the post-translational modification Phosphoserine. The span at 11 to 28 (ELDQDLDDVEEVEEEETG) shows a compositional bias: acidic residues. Phosphothreonine occurs at positions 62 and 64. Ser-69 bears the Phosphoserine mark. Residue Lys-116 is modified to N6-acetyllysine. Residues 125-150 (YEPTEEECEWKPDEEDEISEELKEKA) carry the NAP1L motif motif. A compositionally biased stretch (acidic residues) spans 132–143 (CEWKPDEEDEIS). The disordered stretch occupies residues 132 to 163 (CEWKPDEEDEISEELKEKAKVEDEKKDEEKED). Phosphoserine is present on Ser-143. The segment covering 144 to 163 (EELKEKAKVEDEKKDEEKED) has biased composition (basic and acidic residues). The short motif at 273-279 (IKKKQKH) is the Nuclear localization signal element. Positions 345–391 (EAIEDDDDDYDEEGEEADEEGEEEGDEENDPDYDPKKDQNPAECKQQ) are disordered. The segment covering 346–376 (AIEDDDDDYDEEGEEADEEGEEEGDEENDPD) has biased composition (acidic residues). 5-glutamyl polyglycine is present on residues Glu-359 and Glu-360. A compositionally biased stretch (basic and acidic residues) spans 377–391 (YDPKKDQNPAECKQQ). Cys-388 is modified (cysteine methyl ester). Residue Cys-388 is the site of S-farnesyl cysteine attachment. A propeptide spans 389 to 391 (KQQ) (removed in mature form).

This sequence belongs to the nucleosome assembly protein (NAP) family. In terms of assembly, homodimer. The dimer binds strongly and sequentially to single and double H2A-H2B heterodimers. Interacts with ERCC6; this interaction increases ERCC6 processivity. Interacts with RAD54. Interacts with SETD1A. In terms of processing, polyglycylated by TTLL10 on glutamate residues, resulting in polyglycine chains on the gamma-carboxyl group. Both polyglutamylation and polyglycylation modifications can coexist on the same protein on adjacent residues, and lowering polyglycylation levels increases polyglutamylation, and reciprocally. Post-translationally, polyglutamylated by TTLL4 on glutamate residues, resulting in polyglutamate chains on the gamma-carboxyl group. Both polyglutamylation and polyglycylation modifications can coexist on the same protein on adjacent residues, and lowering polyglycylation levels increases polyglutamylation, and reciprocally.

It is found in the nucleus. Its subcellular location is the melanosome. It localises to the cytoplasm. In terms of biological role, histone chaperone that plays a role in the nuclear import of H2A-H2B and nucleosome assembly. Also participates in several important DNA repair mechanisms: greatly enhances ERCC6-mediated chromatin remodeling which is essential for transcription-coupled nucleotide excision DNA repair. Also stimulates homologous recombination (HR) by RAD51 and RAD54 which is essential in mitotic DNA double strand break (DSB) repair. Plays a key role in the regulation of embryonic neurogenesis. Promotes the proliferation of neural progenitors and inhibits neuronal differentiation during cortical development. Regulates neurogenesis via the modulation of RASSF10; regulates RASSF10 expression by promoting SETD1A-mediated H3K4 methylation at the RASSF10 promoter. The chain is Nucleosome assembly protein 1-like 1 (NAP1L1) from Bos taurus (Bovine).